Here is a 427-residue protein sequence, read N- to C-terminus: Mitogen-activated protein kinase 8 (427 aa).

A Protein kinase domain is found at 26–321 (YQNLKPIGSG…VDEALQHPYI (296 aa)). Residues 32 to 40 (IGSGAQGIV) and lysine 55 each bind ATP. An S-nitrosocysteine modification is found at cysteine 116. The active-site Proton acceptor is the aspartate 151. Threonine 183 bears the Phosphothreonine; by MAP2K7 mark. A TXY motif is present at residues 183–185 (TPY). Position 185 is a phosphotyrosine; by MAP2K4 (tyrosine 185). A phosphoserine mark is found at methionine 301 and serine 377. The interval 371–427 (VIRGQPSPLGAAVINGSQHPSSSSSVNDVSSMSTDPTLASDTDSSLEAAAGPLGCCR) is disordered. Residues 387–403 (SQHPSSSSSVNDVSSMS) are compositionally biased toward low complexity. Polar residues predominate over residues 404 to 415 (TDPTLASDTDSS).

The protein belongs to the protein kinase superfamily. CMGC Ser/Thr protein kinase family. MAP kinase subfamily. As to quaternary structure, forms a complex with MAPK8IP1 and ARHGEF28. Found in a complex with SH3RF1, RAC1, MAP3K11/MLK3, MAP2K7/MKK7 and MAPK8IP1/JIP1. Found in a complex with SH3RF1, RAC2, MAP3K7/TAK1, MAP2K7/MKK7, MAPK8IP1/JIP1 and MAPK9/JNK2. Binds to at least four scaffolding proteins, MAPK8IP1/JIP-1, MAPK8IP2/JIP-2, MAPK8IP3/JIP-3/JSAP1 and SPAG9/MAPK8IP4/JIP-4. These proteins also bind other components of the JNK signaling pathway. Interacts with TP53 and WWOX. Interacts with JAMP. Interacts with HSF1 (via D domain and preferentially with hyperphosphorylated form); this interaction occurs under both normal growth conditions and immediately upon heat shock. Interacts (phosphorylated form) with NFE2; the interaction phosphorylates NFE2 in undifferentiated cells. Interacts with NFATC4. Interacts with MECOM; regulates JNK signaling. Interacts with PIN1; this interaction mediates MAPK8 conformational changes leading to the binding of MAPK8 to its substrates. Interacts with GRIPAP1. Interacts with POU5F1; phosphorylates POU5F1 at 'Ser-355'. Interacts with STMN2, STMN3 and STMN4. Interacts with HSF4. Requires Mg(2+) as cofactor. In terms of processing, dually phosphorylated on Thr-183 and Tyr-185 by MAP2K7 and MAP2K4, which activates the enzyme. Phosphorylated by TAOK2. May be phosphorylated at Thr-183 and Tyr-185 by MAP3K1/MEKK1. Phosphorylated form is more concentrated at synapses than none-phosphorylated.

The protein localises to the cytoplasm. It is found in the nucleus. The protein resides in the synapse. The catalysed reaction is L-seryl-[protein] + ATP = O-phospho-L-seryl-[protein] + ADP + H(+). It carries out the reaction L-threonyl-[protein] + ATP = O-phospho-L-threonyl-[protein] + ADP + H(+). Its activity is regulated as follows. Activated by threonine and tyrosine phosphorylation by either of two dual specificity kinases, MAP2K4 and MAP2K7. MAP2K4 shows a strong preference for Tyr-185 while MAP2K7 phosphorylates Tyr-183 preferentially. Inhibited by dual specificity phosphatases, such as DUSP1. Inhibited by SERPINB3. In terms of biological role, serine/threonine-protein kinase involved in various processes such as cell proliferation, differentiation, migration, transformation and programmed cell death. Extracellular stimuli such as pro-inflammatory cytokines or physical stress stimulate the stress-activated protein kinase/c-Jun N-terminal kinase (SAP/JNK) signaling pathway. In this cascade, two dual specificity kinases MAP2K4/MKK4 and MAP2K7/MKK7 phosphorylate and activate MAPK8/JNK1. In turn, MAPK8/JNK1 phosphorylates a number of transcription factors, primarily components of AP-1 such as JUN, JDP2 and ATF2 and thus regulates AP-1 transcriptional activity. Phosphorylates the replication licensing factor CDT1, inhibiting the interaction between CDT1 and the histone H4 acetylase HBO1 to replication origins. Loss of this interaction abrogates the acetylation required for replication initiation. Promotes stressed cell apoptosis by phosphorylating key regulatory factors including p53/TP53 and Yes-associates protein YAP1. In T-cells, MAPK8 and MAPK9 are required for polarized differentiation of T-helper cells into Th1 cells. Contributes to the survival of erythroid cells by phosphorylating the antagonist of cell death BAD upon EPO stimulation. Mediates starvation-induced BCL2 phosphorylation, BCL2 dissociation from BECN1, and thus activation of autophagy. Phosphorylates STMN2 and hence regulates microtubule dynamics, controlling neurite elongation in cortical neurons. In the developing brain, through its cytoplasmic activity on STMN2, negatively regulates the rate of exit from multipolar stage and of radial migration from the ventricular zone. Phosphorylates several other substrates including heat shock factor protein 4 (HSF4), the deacetylase SIRT1, ELK1, or the E3 ligase ITCH. Phosphorylates the CLOCK-BMAL1 heterodimer and plays a role in the regulation of the circadian clock. Phosphorylates the heat shock transcription factor HSF1, suppressing HSF1-induced transcriptional activity. Phosphorylates POU5F1, which results in the inhibition of POU5F1's transcriptional activity and enhances its proteasomal degradation. Phosphorylates JUND and this phosphorylation is inhibited in the presence of MEN1. In neurons, phosphorylates SYT4 which captures neuronal dense core vesicles at synapses. Phosphorylates EIF4ENIF1/4-ET in response to oxidative stress, promoting P-body assembly. Phosphorylates SIRT6 in response to oxidative stress, stimulating its mono-ADP-ribosyltransferase activity. Phosphorylates NLRP3, promoting assembly of the NLRP3 inflammasome. Phosphorylates ALKBH5 in response to reactive oxygen species (ROS), promoting ALKBH5 sumoylation and inactivation. JNK1 isoforms display different binding patterns: beta-1 preferentially binds to c-Jun, whereas alpha-1, alpha-2, and beta-2 have a similar low level of binding to both c-Jun or ATF2. However, there is no correlation between binding and phosphorylation, which is achieved at about the same efficiency by all isoforms. This Homo sapiens (Human) protein is Mitogen-activated protein kinase 8 (MAPK8).